The chain runs to 304 residues: Serine/threonine-protein phosphatase PP1 isozyme 3 (304 aa).

Asp-61, His-63, Asp-89, and Asn-121 together coordinate Mn(2+). Residue His-122 is the Proton donor of the active site. His-170 and His-245 together coordinate Mn(2+).

This sequence belongs to the PPP phosphatase family. PP-1 subfamily. Mn(2+) serves as cofactor.

The enzyme catalyses O-phospho-L-seryl-[protein] + H2O = L-seryl-[protein] + phosphate. The catalysed reaction is O-phospho-L-threonyl-[protein] + H2O = L-threonyl-[protein] + phosphate. The chain is Serine/threonine-protein phosphatase PP1 isozyme 3 (NPP3) from Nicotiana tabacum (Common tobacco).